Here is a 376-residue protein sequence, read N- to C-terminus: uncharacterized protein (376 aa).

The N-terminal stretch at 1–28 (MCKPRVWRIAHTIVHVGALLLGTSQLTT) is a signal peptide. Residue Cys-29 is the site of N-palmitoyl cysteine attachment. Cys-29 carries S-diacylglycerol cysteine lipidation.

This sequence belongs to the TP013X lipoprotein family.

It is found in the cell membrane. This is an uncharacterized protein from Treponema pallidum (strain Nichols).